Consider the following 56-residue polypeptide: uncharacterized protein (56 aa).

A helical transmembrane segment spans residues 6-26 (MLLIMLYMVLVVNDLILYNIL).

Its subcellular location is the membrane. This is an uncharacterized protein from Dictyostelium discoideum (Social amoeba).